Reading from the N-terminus, the 136-residue chain is Cyclase aurE (136 aa).

Belongs to the aurE cyclase family.

It functions in the pathway polyketide biosynthesis. Functionally, cyclase; part of the gene cluster that mediates the biosynthesis of aurovertins, fungal polyketides that exhibit potent inhibition of adenosine triphosphate synthase. Tha biosynthesis starts with the HR-PKS aurA that selects propionate as the starter unit; synthesizes a hexa-ene chain through the repeated functions of the KR and DH domains in the first six iterations; selectively introduces three alpha-methyl substitutions at C4, C6, and C16 using the S-adensylmethionine-dependent cMET; and shuts off KR and DH in the last three iterations to afford a 1,3,5-triketo portion that can undergo intramolecular cyclization to yield the alpha-pyrone intermediate. AurE may act as a cyclase and enhances the rate of pyrone formation and product release of aurA. The methyltransferase aurB then methylates the C17 hydroxyl group. C17 methylation is required to initiate epoxidation by the downstream monooxygenase aurC. The monooxygenase aurC and the epoxide hydrolase aurD can iteratively transform the terminal triene portion of the methylated precursor into the dioxabicyclo[3.2.1]octane scaffold of aurovertin E. Epoxidation modifications of the precursor occur in two separate steps; bis-epoxidation of the two terminal olefins takes place first, followed by another epoxidation that occurs at C7-C8 after tetrahydrofuran formation. The O-acyltransferase aurG converts aurovertin E to aurovertin A. In Calcarisporium arbuscula (Dendryphion arbuscula), this protein is Cyclase aurE.